Here is a 122-residue protein sequence, read N- to C-terminus: Fluoride-specific ion channel FluC (122 aa).

4 helical membrane passes run 4–24 (LLIA…GTAI), 34–54 (IGTM…MTLL), 66–86 (LALV…EWET), and 95–115 (FWIG…AVWF). Positions 74 and 77 each coordinate Na(+).

It belongs to the fluoride channel Fluc/FEX (TC 1.A.43) family.

It is found in the cell inner membrane. It carries out the reaction fluoride(in) = fluoride(out). Its activity is regulated as follows. Na(+) is not transported, but it plays an essential structural role and its presence is essential for fluoride channel function. Its function is as follows. Fluoride-specific ion channel. Important for reducing fluoride concentration in the cell, thus reducing its toxicity. The sequence is that of Fluoride-specific ion channel FluC from Solibacter usitatus (strain Ellin6076).